The sequence spans 536 residues: Ribulokinase (536 aa).

It belongs to the ribulokinase family.

It catalyses the reaction D-ribulose + ATP = D-ribulose 5-phosphate + ADP + H(+). The catalysed reaction is L-ribulose + ATP = L-ribulose 5-phosphate + ADP + H(+). Its pathway is carbohydrate degradation; L-arabinose degradation via L-ribulose; D-xylulose 5-phosphate from L-arabinose (bacterial route): step 2/3. The polypeptide is Ribulokinase (Staphylococcus epidermidis (strain ATCC 35984 / DSM 28319 / BCRC 17069 / CCUG 31568 / BM 3577 / RP62A)).